The sequence spans 146 residues: UPF0178 protein BcerKBAB4_2842 (146 aa).

The protein belongs to the UPF0178 family.

This Bacillus mycoides (strain KBAB4) (Bacillus weihenstephanensis) protein is UPF0178 protein BcerKBAB4_2842.